A 29-amino-acid chain; its full sequence is Cuticle protein 36 (29 aa).

In terms of biological role, component of the cuticle of migratory locust which contains more than 100 different structural proteins. This chain is Cuticle protein 36, found in Locusta migratoria (Migratory locust).